The following is a 98-amino-acid chain: U10-barytoxin-Tl1a (98 aa).

Positions 1-21 are cleaved as a signal peptide; the sequence is MKTLVLVAVLGVASLYLLSSA. Positions 22–50 are excised as a propeptide; it reads SEVQQLSPAEEEFRAFVSTFGGLFETEER. 3 cysteine pairs are disulfide-bonded: C57-C71, C64-C76, and C70-C89.

This sequence belongs to the neurotoxin 10 (Hwtx-1) family. 27 (ICK-3) subfamily. As to expression, expressed by the venom gland.

The protein localises to the secreted. Ion channel inhibitor. The protein is U10-barytoxin-Tl1a of Trittame loki (Brush-footed trapdoor spider).